The chain runs to 856 residues: DNA mismatch repair protein MutS (856 aa).

Position 618 to 625 (618 to 625 (GPNMGGKS)) interacts with ATP.

Belongs to the DNA mismatch repair MutS family.

In terms of biological role, this protein is involved in the repair of mismatches in DNA. It is possible that it carries out the mismatch recognition step. This protein has a weak ATPase activity. In Shewanella baltica (strain OS185), this protein is DNA mismatch repair protein MutS.